The chain runs to 478 residues: Methylenetetrahydrofolate--tRNA-(uracil-5-)-methyltransferase TrmFO (478 aa).

16–21 contacts FAD; sequence GAGLAG. The disordered stretch occupies residues 429 to 448; that stretch reads PLANPPTKGPDGKRLRGPEK. Basic and acidic residues predominate over residues 438–448; it reads PDGKRLRGPEK.

The protein belongs to the MnmG family. TrmFO subfamily. FAD serves as cofactor.

The protein localises to the cytoplasm. It carries out the reaction uridine(54) in tRNA + (6R)-5,10-methylene-5,6,7,8-tetrahydrofolate + NADH + H(+) = 5-methyluridine(54) in tRNA + (6S)-5,6,7,8-tetrahydrofolate + NAD(+). The enzyme catalyses uridine(54) in tRNA + (6R)-5,10-methylene-5,6,7,8-tetrahydrofolate + NADPH + H(+) = 5-methyluridine(54) in tRNA + (6S)-5,6,7,8-tetrahydrofolate + NADP(+). Functionally, catalyzes the folate-dependent formation of 5-methyl-uridine at position 54 (M-5-U54) in all tRNAs. In Rhodopseudomonas palustris (strain ATCC BAA-98 / CGA009), this protein is Methylenetetrahydrofolate--tRNA-(uracil-5-)-methyltransferase TrmFO.